A 383-amino-acid polypeptide reads, in one-letter code: Protein delta homolog 2 (383 aa).

An N-terminal signal peptide occupies residues 1–26 (MPSGCRCLHLVCLLCILGAPVKPARG). EGF-like domains lie at 27-58 (NDCSSLCDLAHGCCAPDGSCRCDPGWEGLHCE), 62-89 (RMPGCQHGTCHQPWQCICHTGWAGKFCD), 91-129 (DEHICTTQSPCRNGGQCVYDGGGDYHCVCPPGFHGRDCE), and 131-172 (KAGP…ARCE). At 27 to 306 (NDCSSLCDLA…RQEAGLGEPS (280 aa)) the chain is on the extracellular side. 17 disulfides stabilise this stretch: Cys-29/Cys-40, Cys-33/Cys-46, Cys-48/Cys-57, Cys-66/Cys-71, Cys-79/Cys-88, Cys-95/Cys-107, Cys-101/Cys-117, Cys-119/Cys-128, Cys-135/Cys-148, Cys-142/Cys-160, Cys-162/Cys-171, Cys-178/Cys-189, Cys-183/Cys-198, Cys-200/Cys-209, Cys-216/Cys-227, Cys-221/Cys-236, and Cys-238/Cys-247. N-linked (GlcNAc...) asparagine glycosylation occurs at Asn-157. Residues 174–210 (NVDDCLMRPCANGATCLDGINRFSCLCPEGFTGRFCT) form the EGF-like 5; calcium-binding domain. Residues 212–248 (NLDDCASRPCQRGARCRDRVHDFDCLCPSGYGGKTCE) form the EGF-like 6; calcium-binding domain. The chain crosses the membrane as a helical span at residues 307–327 (LVAVVVFGAVTAALVLSTVLL). Residues 328-383 (TLRAWRRGFCPPGPCCYPAPHYAPARQDQECQVSMLPTGLPLPPDLPPEPGKTTAL) are Cytoplasmic-facing. A disordered region spans residues 364-383 (PTGLPLPPDLPPEPGKTTAL). A compositionally biased stretch (pro residues) spans 367 to 377 (LPLPPDLPPEP).

It is found in the membrane. Regulates adipogenesis. The chain is Protein delta homolog 2 (DLK2) from Bos taurus (Bovine).